We begin with the raw amino-acid sequence, 545 residues long: Cannabidiolic acid synthase-like 1 (545 aa).

Positions 1–28 (MKCSTFCFWYVCKIIFFFLSFNIQISIA) are cleaved as a signal peptide. A disulfide bridge connects residues Cys-37 and Cys-99. Asn-45, Asn-65, Asn-89, and Asn-168 each carry an N-linked (GlcNAc...) asparagine glycan. Residues 77 to 251 (TTPKPLVIIT…AAWKIRLVAV (175 aa)) enclose the FAD-binding PCMH-type domain. The segment at residues 114–176 (HDAEGMSYIS…ENLSFPAGYC (63 aa)) is a cross-link (6-(S-cysteinyl)-8alpha-(pros-histidyl)-FAD (His-Cys)). Residue His-292 coordinates substrate. 4 N-linked (GlcNAc...) asparagine glycosylation sites follow: Asn-297, Asn-305, Asn-329, and Asn-361. Tyr-417 serves as a coordination point for substrate. Residue Asn-467 is glycosylated (N-linked (GlcNAc...) asparagine). The Proton acceptor role is filled by Tyr-484. The N-linked (GlcNAc...) asparagine glycan is linked to Asn-499.

This sequence belongs to the oxygen-dependent FAD-linked oxidoreductase family. FAD serves as cofactor. Post-translationally, the FAD cofactor is bound via a bicovalent 6-S-cysteinyl, 8alpha-N1-histidyl FAD linkage.

Its subcellular location is the secreted. Its function is as follows. Has no cannabidiolic acid synthase activity. The chain is Cannabidiolic acid synthase-like 1 (CBDAS2) from Cannabis sativa (Hemp).